The chain runs to 510 residues: MSKKPVALIILDGFGLREEEKGNAVAHAQKPNFDRYWNEFPHATLRADGENVGLPEGQMGNSEVGHLNIGAGRIVYQSLTRVNLSIREGDFFKNETFIKAMDHVKEKQSALHIYGLLSDGGIHSHIDHIYALLDMAKQQNVERVYVHGFLDGRDVGPTSAEVYLKGLQDKFDEVGLGKLATVHGRYYAMDRDKRWDRVEKSYRAMVYGEGPSYKNGLELLDDSYKNNIVDEFVIPSVITEEDGTPVATVKDDDAVIFCNFRPDRAIQLSQVFTNEDFRGFDRGEKMPKRLHFVCLTKFSETVKGFVAFKPTNLDNTLGEVLSQQNYTQLRIAETEKYPHVTFFFSGGREDEFPGEERILINSPKVATYDLKPEMSAYEVTDALVKEIEGEKHDVIILNFANPDMVGHSGMLEPTVKAIEAVDECLGRVVDALLQKGGAAIITADHGNADEVVTLDGKPMTAHTTNKVPVIVTEKGITLREDGILADLAPTVLDLLGADKPKEMTGKTLKQ.

Aspartate 12 is a Mn(2+) binding site. A Phosphotyrosine modification is found at tyrosine 36. Serine 62 is a binding site for Mn(2+). Serine 62 serves as the catalytic Phosphoserine intermediate. Substrate-binding positions include histidine 123, 153 to 154, arginine 185, arginine 191, 261 to 264, and lysine 336; these read RD and RPDR. The Mn(2+) site is built by aspartate 403, histidine 407, aspartate 444, histidine 445, and histidine 462.

It belongs to the BPG-independent phosphoglycerate mutase family. As to quaternary structure, monomer. Requires Mn(2+) as cofactor.

It catalyses the reaction (2R)-2-phosphoglycerate = (2R)-3-phosphoglycerate. It participates in carbohydrate degradation; glycolysis; pyruvate from D-glyceraldehyde 3-phosphate: step 3/5. Essential for rapid growth and for sporulation. Catalyzes the interconversion of 2-phosphoglycerate and 3-phosphoglycerate. The sequence is that of 2,3-bisphosphoglycerate-independent phosphoglycerate mutase from Shouchella clausii (strain KSM-K16) (Alkalihalobacillus clausii).